Reading from the N-terminus, the 579-residue chain is Folliculin (579 aa).

The interval 32-82 (GAGSGDGAGRGEPADEEEGGIQMSSRIRAHSPAEGASAESSSPGPKKSDMC) is disordered. Ser62 and Ser73 each carry phosphoserine. Positions 63 to 76 (PAEGASAESSSPGP) are enriched in low complexity. Residues 86–242 (RSLAAGHPGY…RNGNAARSLT (157 aa)) form the uDENN FLCN/SMCR8-type domain. Residues 285-309 (QMEQLAELEEESESWDNSEAEEEEK) adopt a coiled-coil conformation. The segment covering 294 to 308 (EESESWDNSEAEEEE) has biased composition (acidic residues). The disordered stretch occupies residues 294 to 321 (EESESWDNSEAEEEEKGPALPEGAEGRE). Phosphoserine occurs at positions 302, 406, 537, 542, and 571. Positions 339 to 491 (QPRKLSVFKS…ILNKMEAALT (153 aa)) constitute a cDENN FLCN/SMCR8-type domain. The 66-residue stretch at 493-558 (QNLSVDVVDQ…LLKFWMTGLS (66 aa)) folds into the dDENN FLCN/SMCR8-type domain.

The protein belongs to the folliculin family. As to quaternary structure, interacts (via C-terminus) with FNIP1 or FNIP2 (via C-terminus). Component of the lysosomal folliculin complex (LFC), composed of FLCN, FNIP1 (or FNIP2), RagA/RRAGA or RagB/RRAGB GDP-bound, RagC/RRAGC or RagD/RRAGD GTP-bound, and Ragulator. Interaction with FNIP1 or FNIP2 mediates indirect interaction with the PRKAA1, PRKAB1 and PRKAG1 subunits of 5'-AMP-activated protein kinase (AMPK). Interacts with HSP90AA1 in the presence of FNIP1. Interacts with HSP70, STUB1, CDC37, AHSA1, CCT2, STIP1, PTGES3 and PPP5C. Interacts with GABARAP; interaction takes place in the presence of FNIP1 and/or FNIP2. Interacts with RILP; the interaction is direct and promotes association between RILP and RAB34. Interacts with KIF3A and KIF3B. Interacts with lactate dehydrogenase LDHA, but not LDHB; the interaction is direct, may preferentially bind LDHA dimers rather than tetramers, and regulates LDHA activity, acting as an uncompetitive inhibitor. In terms of processing, phosphorylation by ULK1 modulates the interaction with GABARAP and is required to regulate autophagy.

The protein resides in the lysosome membrane. The protein localises to the cytoplasm. Its subcellular location is the cytosol. It localises to the cell projection. It is found in the cilium. The protein resides in the cytoskeleton. The protein localises to the microtubule organizing center. Its subcellular location is the centrosome. It localises to the spindle. It is found in the nucleus. Its activity is regulated as follows. GTPase-activating activity is inhibited in the folliculin complex (LFC), which stabilizes the GDP-bound state of RagA/RRAGA (or RagB/RRAGB), because Arg-164 is located far from the RagC/RRAGC or RagD/RRAGD nucleotide pocket. Disassembly of the LFC complex upon amino acid restimulation liberates the GTPase-activating activity. Multi-functional protein, involved in both the cellular response to amino acid availability and in the regulation of glycolysis. GTPase-activating protein that plays a key role in the cellular response to amino acid availability through regulation of the non-canonical mTORC1 signaling cascade controlling the MiT/TFE factors TFEB and TFE3. Activates mTORC1 by acting as a GTPase-activating protein: specifically stimulates GTP hydrolysis by RagC/RRAGC or RagD/RRAGD, promoting the conversion to the GDP-bound state of RagC/RRAGC or RagD/RRAGD, and thereby activating the kinase activity of mTORC1. The GTPase-activating activity is inhibited during starvation and activated in presence of nutrients. Acts as a key component for non-canonical mTORC1-dependent control of the MiT/TFE factors TFEB and TFE3, while it is not involved in mTORC1-dependent phosphorylation of canonical RPS6KB1/S6K1 and EIF4EBP1/4E-BP1. In low-amino acid conditions, the lysosomal folliculin complex (LFC) is formed on the membrane of lysosomes, which inhibits the GTPase-activating activity of FLCN, inactivates mTORC1 and maximizes nuclear translocation of TFEB and TFE3. Upon amino acid restimulation, RagA/RRAGA (or RagB/RRAGB) nucleotide exchange promotes disassembly of the LFC complex and liberates the GTPase-activating activity of FLCN, leading to activation of mTORC1 and subsequent cytoplasmic retention of TFEB and TFE3. Indirectly acts as a positive regulator of Wnt signaling by promoting mTOR-dependent cytoplasmic retention of MiT/TFE factor TFE3. Required for the exit of hematopoietic stem cell from pluripotency by promoting mTOR-dependent cytoplasmic retention of TFE3, thereby increasing Wnt signaling. Involved in the control of embryonic stem cells differentiation; together with LAMTOR1 it is necessary to recruit and activate RagC/RRAGC and RagD/RRAGD at the lysosomes, and to induce exit of embryonic stem cells from pluripotency via non-canonical, mTOR-independent TFE3 inactivation. Acts as an inhibitor of browning of adipose tissue by regulating mTOR-dependent cytoplasmic retention of TFE3. In response to flow stress, regulates STK11/LKB1 accumulation and mTORC1 activation through primary cilia: may act by recruiting STK11/LKB1 to primary cilia for activation of AMPK resided at basal bodies, causing mTORC1 down-regulation. Together with FNIP1 and/or FNIP2, regulates autophagy: following phosphorylation by ULK1, interacts with GABARAP and promotes autophagy. Required for starvation-induced perinuclear clustering of lysosomes by promoting association of RILP with its effector RAB34. Regulates glycolysis by binding to lactate dehydrogenase LDHA, acting as an uncompetitive inhibitor. In Bos taurus (Bovine), this protein is Folliculin.